A 201-amino-acid chain; its full sequence is Small ribosomal subunit protein uS4 (201 aa).

A disordered region spans residues 22-47; the sequence is TGKELARRPYAPGDHGNDRRGKLSEY. The S4 RNA-binding domain occupies 93–153; the sequence is RRLDNMVYRL…EKSKNLDVIK (61 aa).

The protein belongs to the universal ribosomal protein uS4 family. As to quaternary structure, part of the 30S ribosomal subunit. Contacts protein S5. The interaction surface between S4 and S5 is involved in control of translational fidelity.

In terms of biological role, one of the primary rRNA binding proteins, it binds directly to 16S rRNA where it nucleates assembly of the body of the 30S subunit. With S5 and S12 plays an important role in translational accuracy. The sequence is that of Small ribosomal subunit protein uS4 from Limosilactobacillus fermentum (strain NBRC 3956 / LMG 18251) (Lactobacillus fermentum).